A 358-amino-acid polypeptide reads, in one-letter code: MTHQIAVLPGDGIGPEIVEQAERVLKALDLPLELRQAPVGGAAFDQFEHPLPPATLELAQGSHAVLFGAVGDWKYDTLPREFRPEQAILGLRKALGLFANLRPAILYPELASASSLKPEIVSGLDILIIRELTGDIYFGTPRGVRTAADGAFAGEREGYDTMRYAESEVRRIARIGFESARKRNKKLCSVDKANVLETSQFWRDLVIEVSRDYPDVELSHMYVDNAAMQLVRNPRQFDVIVTGNLFGDILSDEAAMLTGSIGMLPSASLNAAGQGLYEPSHGSAPDIAGQGIANPLATILSAAMLLRYSLNLAPQADRVEAAVRKVLADGLRTADIHEAGTTKVSTSQMGDAVLKALG.

Positions 92, 102, 130, and 224 each coordinate substrate. Residues Asp224, Asp248, and Asp252 each coordinate Mg(2+). 282-294 (GSAPDIAGQGIAN) contacts NAD(+).

The protein belongs to the isocitrate and isopropylmalate dehydrogenases family. LeuB type 1 subfamily. Homodimer. Requires Mg(2+) as cofactor. The cofactor is Mn(2+).

Its subcellular location is the cytoplasm. It catalyses the reaction (2R,3S)-3-isopropylmalate + NAD(+) = 4-methyl-2-oxopentanoate + CO2 + NADH. It participates in amino-acid biosynthesis; L-leucine biosynthesis; L-leucine from 3-methyl-2-oxobutanoate: step 3/4. Catalyzes the oxidation of 3-carboxy-2-hydroxy-4-methylpentanoate (3-isopropylmalate) to 3-carboxy-4-methyl-2-oxopentanoate. The product decarboxylates to 4-methyl-2 oxopentanoate. This Bordetella parapertussis (strain 12822 / ATCC BAA-587 / NCTC 13253) protein is 3-isopropylmalate dehydrogenase.